The sequence spans 275 residues: uncharacterized protein (275 aa).

The span at 148 to 158 (TFPTTAPSITP) shows a compositional bias: polar residues. Residues 148–173 (TFPTTAPSITPGNKEGEKTTSTDTDE) form a disordered region. The chain crosses the membrane as a helical span at residues 187–207 (ILIAVTLLLSGVAIIVFVIFE). Positions 234-264 (GQPPGTAESKPDSQPQKVGQDAANSSNPKKA) are disordered. A compositionally biased stretch (polar residues) spans 245–261 (DSQPQKVGQDAANSSNP).

It is found in the membrane. This is an uncharacterized protein from Homo sapiens (Human).